Consider the following 246-residue polypeptide: UDP-N-acetyl-D-mannosaminuronic acid transferase (246 aa).

Belongs to the glycosyltransferase 26 family.

The catalysed reaction is UDP-N-acetyl-alpha-D-mannosaminouronate + N-acetyl-alpha-D-glucosaminyl-di-trans,octa-cis-undecaprenyl diphosphate = beta-D-ManNAcA-(1-&gt;4)-alpha-D-GlcNAc-di-trans,octa-cis-undecaprenyl diphosphate + UDP + H(+). The protein operates within bacterial outer membrane biogenesis; enterobacterial common antigen biosynthesis. Catalyzes the synthesis of Und-PP-GlcNAc-ManNAcA (Lipid II), the second lipid-linked intermediate involved in enterobacterial common antigen (ECA) synthesis. This chain is UDP-N-acetyl-D-mannosaminuronic acid transferase, found in Escherichia coli O6:K15:H31 (strain 536 / UPEC).